The sequence spans 692 residues: MGTVSSRRSWWPLPLPLLLLLLLGPAGARAQEDEDGDYEELVLALRSEEDGLADAPEHGATATFHRCAKDPWRLPGTYVVVLKEETHRSQSERTARRLQAQAARRGYLTKILHVFHHLLPGFLVKMSGDLLELALKLPHVDYIEEDSSVFAQSIPWNLERITPARYRADEYQPPKGGSLVEVYLLDTSIQSDHREIEGRVMVTDFESVPEEDGTRFHRQASKCDSHGTHLAGVVSGRDAGVAKGAGLRSLRVLNCQGKGTVSGTLIGLEFIRKSQLVQPVGPLVVLLPLAGGYSRVFNAACQRLARAGVVLVTAAGNFRDDACLYSPASAPEVITVGATNAQDQPVTLGTLGTNFGRCVDLFAPGEDIIGASSDCSTCFVSRSGTSQAAAHVAGIAAMMLSAEPELTLAELRQRLIHFSAKDVINEAWFPEDQRVLTPNLVAALPPSTHRAGWQLFCRTVWSAHSGPTRMATAVARCAQDEELLSCSSFSRSGKRRGERIEAQGGKRVCRAHNAFGGEGVYAIARCCLLPQVNCSVHTAPPAGASMGTRVHCHQQGHVLTGCSSHWEVEDLGTHKPPVLRPRGQPNQCVGHREASIHASCCHAPGLECKVKEHGIPAPQEQVIVACEDGWTLTGCSPLPGTSHVLGAYAVDNTCVVRSRDVSTTGSTSKEAVAAVAICCRSRHLVQASQELQ.

The first 30 residues, 1–30 (MGTVSSRRSWWPLPLPLLLLLLLGPAGARA), serve as a signal peptide directing secretion. Positions 31–152 (QEDEDGDYEE…IEEDSSVFAQ (122 aa)) are excised as a propeptide. The residue at position 38 (Tyr38) is a Sulfotyrosine. Phosphoserine is present on Ser47. In terms of domain architecture, Inhibitor I9 spans 77–149 (TYVVVLKEET…VDYIEEDSSV (73 aa)). The 290-residue stretch at 155–444 (PWNLERITPA…VLTPNLVAAL (290 aa)) folds into the Peptidase S8 domain. Catalysis depends on charge relay system residues Asp186 and His226. Cystine bridges form between Cys223-Cys255 and Cys323-Cys358. Ser386 functions as the Charge relay system in the catalytic mechanism. The C-terminal domain stretch occupies residues 450–692 (RAGWQLFCRT…HLVQASQELQ (243 aa)). Intrachain disulfides connect Cys457–Cys527, Cys477–Cys526, and Cys486–Cys509. Asn533 carries an N-linked (GlcNAc...) asparagine glycan. Cystine bridges form between Cys534–Cys601, Cys552–Cys600, Cys562–Cys588, Cys608–Cys679, Cys626–Cys678, and Cys635–Cys654. Position 688 is a phosphoserine (Ser688).

This sequence belongs to the peptidase S8 family. In terms of assembly, monomer. Can self-associate to form dimers and higher multimers which may have increased LDLR degrading activity. The precursor protein but not the mature protein may form multimers. Interacts with APOB, VLDLR, LRP8/APOER2 and BACE1. The full-length immature form (pro-PCSK9) interacts with SCNN1A, SCNN1B and SCNN1G. The pro-PCSK9 form (via C-terminal domain) interacts with LDLR. Interacts (via the C-terminal domain) with ANXA2 (via repeat Annexin 1); the interaction inhibits the degradation of LDLR. The cofactor is Ca(2+). In terms of processing, cleavage by furin and PCSK5 generates a truncated inactive protein that is unable to induce LDLR degradation. Undergoes autocatalytic cleavage in the endoplasmic reticulum to release the propeptide from the N-terminus and the cleavage of the propeptide is strictly required for its maturation and activation. The cleaved propeptide however remains associated with the catalytic domain through non-covalent interactions, preventing potential substrates from accessing its active site. As a result, it is secreted from cells as a propeptide-containing, enzymatically inactive protein. Post-translationally, phosphorylation protects the propeptide against proteolysis.

It localises to the cytoplasm. Its subcellular location is the secreted. The protein resides in the endosome. It is found in the lysosome. The protein localises to the cell surface. It localises to the endoplasmic reticulum. Its subcellular location is the golgi apparatus. Its proteolytic activity is autoinhibited by the non-covalent binding of the propeptide to the catalytic domain. Inhibited by EGTA. Its function is as follows. Crucial player in the regulation of plasma cholesterol homeostasis. Binds to low-density lipid receptor family members: low density lipoprotein receptor (LDLR), very low density lipoprotein receptor (VLDLR), apolipoprotein E receptor (LRP1/APOER) and apolipoprotein receptor 2 (LRP8/APOER2), and promotes their degradation in intracellular acidic compartments. Acts via a non-proteolytic mechanism to enhance the degradation of the hepatic LDLR through a clathrin LDLRAP1/ARH-mediated pathway. May prevent the recycling of LDLR from endosomes to the cell surface or direct it to lysosomes for degradation. Can induce ubiquitination of LDLR leading to its subsequent degradation. Inhibits intracellular degradation of APOB via the autophagosome/lysosome pathway in a LDLR-independent manner. Involved in the disposal of non-acetylated intermediates of BACE1 in the early secretory pathway. Inhibits epithelial Na(+) channel (ENaC)-mediated Na(+) absorption by reducing ENaC surface expression primarily by increasing its proteasomal degradation. Regulates neuronal apoptosis via modulation of LRP8/APOER2 levels and related anti-apoptotic signaling pathways. In Macaca mulatta (Rhesus macaque), this protein is Proprotein convertase subtilisin/kexin type 9 (PCSK9).